Reading from the N-terminus, the 949-residue chain is Protocadherin alpha-11 (949 aa).

A signal peptide spans 1–29; that stretch reads MFGFQRRGLGTPRLQLWLLLLEFWEVGSG. 6 consecutive Cadherin domains span residues 30 to 133, 157 to 242, 243 to 349, 350 to 454, 455 to 564, and 580 to 677; these read QLHY…PPVF, ASDA…DPEF, DKSE…SPEV, AVTS…APAF, AQPE…APAL, and VPRS…APKA. Topologically, residues 30–696 are extracellular; it reads QLHYSVSEEA…SPEAALVDVN (667 aa). N-linked (GlcNAc...) asparagine glycosylation is found at N265 and N304. N547 is a glycosylation site (N-linked (GlcNAc...) asparagine). A helical transmembrane segment spans residues 697–717; the sequence is VYLIIAICVVSSLLVLTLLLY. Residues 718-949 are Cytoplasmic-facing; the sequence is TALWWSATPT…GNSTTDNSDQ (232 aa). 2 PXXP repeats span residues 733–736 and 773–776; these read PGKP and PSLP. A 6 X 4 AA repeats of P-X-X-P region spans residues 733 to 893; sequence PGKPTLVCSR…PDKFIIPGSP (161 aa). 2 disordered regions span residues 753 to 807 and 826 to 949; these read RRQR…DWRY and ILRA…NSDQ. Basic and acidic residues predominate over residues 780–789; that stretch reads NKEEEGERQE. PXXP repeat units lie at residues 795–798, 831–834, 872–875, and 890–893; these read PGQP, PGGP, PGNP, and PGSP. The span at 908-922 shows a compositional bias: basic and acidic residues; it reads DKSDFITFGKKEETK.

The protein resides in the cell membrane. Potential calcium-dependent cell-adhesion protein. May be involved in the establishment and maintenance of specific neuronal connections in the brain. This chain is Protocadherin alpha-11 (PCDHA11), found in Homo sapiens (Human).